The following is a 630-amino-acid chain: Very-long-chain aldehyde decarbonylase GL1-7 (630 aa).

4 consecutive transmembrane segments (helical) span residues 93–113 (LYLD…YAII), 126–146 (GALI…YWFH), 185–205 (FLLF…SVLA), and 325–345 (VWYM…AWIY). The Fatty acid hydroxylase domain maps to 133-272 (LHMGPVEFLY…MPFYDYIYNT (140 aa)).

It belongs to the sterol desaturase family. As to quaternary structure, homodimer. Expressed in panicles at low levels.

It is found in the endoplasmic reticulum membrane. The enzyme catalyses a long-chain fatty aldehyde + 2 NADPH + O2 + H(+) = a long-chain alkane + formate + 2 NADP(+) + H2O. In terms of biological role, aldehyde decarbonylase involved in the conversion of aldehydes to alkanes. Core component of a very-long-chain alkane synthesis complex. The sequence is that of Very-long-chain aldehyde decarbonylase GL1-7 from Oryza sativa subsp. japonica (Rice).